The following is a 247-amino-acid chain: Phycocyanobilin:ferredoxin oxidoreductase (247 aa).

Belongs to the HY2 family.

It carries out the reaction (2R,3Z)-phycocyanobilin + 4 oxidized [2Fe-2S]-[ferredoxin] = biliverdin IXalpha + 4 reduced [2Fe-2S]-[ferredoxin] + 4 H(+). Functionally, catalyzes the four-electron reduction of biliverdin IX-alpha (2-electron reduction at both the A and D rings); the reaction proceeds via an isolatable 2-electron intermediate, 181,182-dihydrobiliverdin. The chain is Phycocyanobilin:ferredoxin oxidoreductase (pcyA) from Prochlorococcus marinus (strain SARG / CCMP1375 / SS120).